A 416-amino-acid polypeptide reads, in one-letter code: Leu/Ile/Val-binding protein homolog 4 (416 aa).

The first 26 residues, 1–26, serve as a signal peptide directing secretion; that stretch reads MSLKVFLQAGVACAALSLAGAAGASA.

It belongs to the leucine-binding protein family.

In terms of biological role, component of an amino-acid transport system. This Brucella abortus (strain 2308) protein is Leu/Ile/Val-binding protein homolog 4.